The sequence spans 167 residues: UPF0336 protein MAP_4109 (167 aa).

A MaoC-like domain is found at 21–124; that stretch reads GREQLRQFAL…RFGADIVVTK (104 aa).

It belongs to the UPF0336 family.

In Mycolicibacterium paratuberculosis (strain ATCC BAA-968 / K-10) (Mycobacterium paratuberculosis), this protein is UPF0336 protein MAP_4109.